A 125-amino-acid chain; its full sequence is MQWQGRSVRKPSGGRYHTSQGKKRTEIGRAPAETHIGEERRRIVRTFGGNQKVRALRLEYATVSNPATGETKKTKIEAVEANSADPNYVRRKLLTKGAIIKTEMGRARIVSRPSQDGVVNAVLLA.

The tract at residues 1-35 (MQWQGRSVRKPSGGRYHTSQGKKRTEIGRAPAETH) is disordered.

Belongs to the eukaryotic ribosomal protein eS8 family. In terms of assembly, part of the 30S ribosomal subunit.

This Methanoculleus marisnigri (strain ATCC 35101 / DSM 1498 / JR1) protein is Small ribosomal subunit protein eS8.